Consider the following 171-residue polypeptide: Photosystem I assembly protein Ycf3 (171 aa).

TPR repeat units follow at residues 35–68, 72–105, and 120–153; these read AFTY…EIDP, SYIL…NPSL, and GEQA…APSN.

This sequence belongs to the Ycf3 family.

Its subcellular location is the plastid. The protein localises to the chloroplast thylakoid membrane. In terms of biological role, essential for the assembly of the photosystem I (PSI) complex. May act as a chaperone-like factor to guide the assembly of the PSI subunits. This chain is Photosystem I assembly protein Ycf3, found in Angiopteris evecta (Mule's foot fern).